Consider the following 317-residue polypeptide: MPVLGSQRRLLGSLNCTPPATFPLTLAPNRTGPQCLEVSIPDGLFLSLGLVSLVENVLVVAAIAKNRNLHSPMYYFICCLAVSDLLVSVSNVLETAVMLLLEAGALAARAAVVQQLDNVIDMLICGSMVSSLCFLGAIAVDRYISIFYALRYHSVVTLPRAWRIIAAIWVASILTSLLFITYYNHTVVLLCLVGFFIAMLALMAVLYVHMLARACQHARGIARLQKRQRPIHQGFGLKGAATLTILLGVFFLCWGPFFLHLSLIVLCPQHPTCGCIFKNFNLFLALIICNAIVDPLIYAFRSQELRKTLQEVLQCSW.

At 1 to 37 (MPVLGSQRRLLGSLNCTPPATFPLTLAPNRTGPQCLE) the chain is on the extracellular side. Asn-29 carries N-linked (GlcNAc...) asparagine glycosylation. A helical transmembrane segment spans residues 38 to 63 (VSIPDGLFLSLGLVSLVENVLVVAAI). The Cytoplasmic portion of the chain corresponds to 64-72 (AKNRNLHSP). The helical transmembrane segment at 73-93 (MYYFICCLAVSDLLVSVSNVL) threads the bilayer. The Extracellular segment spans residues 94–118 (ETAVMLLLEAGALAARAAVVQQLDN). A helical transmembrane segment spans residues 119 to 140 (VIDMLICGSMVSSLCFLGAIAV). The Cytoplasmic segment spans residues 141-163 (DRYISIFYALRYHSVVTLPRAWR). A helical membrane pass occupies residues 164–183 (IIAAIWVASILTSLLFITYY). At 184-191 (NHTVVLLC) the chain is on the extracellular side. The helical transmembrane segment at 192-211 (LVGFFIAMLALMAVLYVHML) threads the bilayer. Residues 212 to 240 (ARACQHARGIARLQKRQRPIHQGFGLKGA) lie on the Cytoplasmic side of the membrane. A helical membrane pass occupies residues 241–266 (ATLTILLGVFFLCWGPFFLHLSLIVL). Residues 267–279 (CPQHPTCGCIFKN) lie on the Extracellular side of the membrane. A helical transmembrane segment spans residues 280–300 (FNLFLALIICNAIVDPLIYAF). Residues 301-317 (RSQELRKTLQEVLQCSW) lie on the Cytoplasmic side of the membrane. Cys-315 is lipidated: S-palmitoyl cysteine.

This sequence belongs to the G-protein coupled receptor 1 family. As to quaternary structure, interacts with MGRN1, but does not undergo MGRN1-mediated ubiquitination; this interaction competes with GNAS-binding and thus inhibits agonist-induced cAMP production. Interacts with OPN3; the interaction results in a decrease in MC1R-mediated cAMP signaling and ultimately a decrease in melanin production in melanocytes.

It localises to the cell membrane. Its function is as follows. Receptor for MSH (alpha, beta and gamma) and ACTH. The activity of this receptor is mediated by G proteins which activate adenylate cyclase. Mediates melanogenesis, the production of eumelanin (black/brown) and phaeomelanin (red/yellow), via regulation of cAMP signaling in melanocytes. The protein is Melanocyte-stimulating hormone receptor (MC1R) of Capreolus capreolus (European roe deer).